We begin with the raw amino-acid sequence, 426 residues long: Histidine--tRNA ligase (426 aa).

The protein belongs to the class-II aminoacyl-tRNA synthetase family. In terms of assembly, homodimer.

It is found in the cytoplasm. It catalyses the reaction tRNA(His) + L-histidine + ATP = L-histidyl-tRNA(His) + AMP + diphosphate + H(+). This is Histidine--tRNA ligase from Streptococcus equi subsp. zooepidemicus (strain MGCS10565).